Here is a 527-residue protein sequence, read N- to C-terminus: Probable malate:quinone oxidoreductase (527 aa).

The protein belongs to the MQO family. It depends on FAD as a cofactor.

It catalyses the reaction (S)-malate + a quinone = a quinol + oxaloacetate. Its pathway is carbohydrate metabolism; tricarboxylic acid cycle; oxaloacetate from (S)-malate (quinone route): step 1/1. The chain is Probable malate:quinone oxidoreductase from Pectobacterium carotovorum subsp. carotovorum (strain PC1).